The sequence spans 319 residues: MTEPTVARPDIDPVLKMLLDTFPVTFTAADGVEVARARLRQLKTPPELLPELRIEERTVGYDGLTDIPVRVYWPPVVRDNLPVVVYYHGGGWSLGGLDTHDPVARAHAVGAQAIVVSVDYRLAPEHPYPAGIDDSWAALRWVGENAAELGGDPSRIAVAGDSAGGNISAVMAQLARDVGGPPLVFQLLWYPTTMADLSLPSFTENADAPILDRDVIDAFLAWYVPGLDISDHTMLPTTLAPGNADLSGLPPAFIGTAEHDPLRDDGACYAELLTAAGVSVELSNEPTMVHGYVNFALVVPAAAEATGRGLAALKRALHA.

An Involved in the stabilization of the negatively charged intermediate by the formation of the oxyanion hole motif is present at residues 88–90 (HGG). Catalysis depends on residues serine 162, aspartate 260, and histidine 290.

It belongs to the 'GDXG' lipolytic enzyme family. As to quaternary structure, monomer.

It carries out the reaction a carboxylic ester + H2O = an alcohol + a carboxylate + H(+). Hydrolyzes various short-chain esters. In Mycobacterium tuberculosis (strain CDC 1551 / Oshkosh), this protein is Carboxylesterase NlhH (nlhH).